We begin with the raw amino-acid sequence, 207 residues long: Guanylate kinase (207 aa).

The Guanylate kinase-like domain occupies 4–184 (GTLYIVSAPS…AQMDFRSIIR (181 aa)). Residue 11–18 (APSGAGKS) participates in ATP binding.

Belongs to the guanylate kinase family.

It localises to the cytoplasm. It catalyses the reaction GMP + ATP = GDP + ADP. In terms of biological role, essential for recycling GMP and indirectly, cGMP. This chain is Guanylate kinase, found in Aliivibrio fischeri (strain ATCC 700601 / ES114) (Vibrio fischeri).